The following is a 1335-amino-acid chain: Aldehyde oxidase 2 (1335 aa).

The region spanning 8-95 (DVLVFFVNGR…GAAVTTVEGV (88 aa)) is the 2Fe-2S ferredoxin-type domain. Residues cysteine 47, cysteine 52, cysteine 55, and cysteine 77 each coordinate [2Fe-2S] cluster. Residue glutamine 116 coordinates Mo-molybdopterin. [2Fe-2S] cluster is bound by residues cysteine 117, cysteine 120, cysteine 152, and cysteine 154. Position 154 (cysteine 154) interacts with Mo-molybdopterin. The region spanning 242–427 (FRGDRVTWVS…ESVHIPHSQK (186 aa)) is the FAD-binding PCMH-type domain. Residues 270 to 277 (LVLGNTAL), alanine 351, serine 360, histidine 364, aspartate 373, and leucine 417 contribute to the FAD site. Mo-molybdopterin-binding positions include 821-822 (GF), 1103-1106 (ASVG), glutamine 1218, and leucine 1285. The Proton acceptor; for azaheterocycle hydroxylase activity role is filled by glutamate 1287.

Belongs to the xanthine dehydrogenase family. In terms of assembly, homodimer. The cofactor is [2Fe-2S] cluster. Requires FAD as cofactor. Mo-molybdopterin is required as a cofactor. As to expression, detected in kidney, Harderian gland and olfactory mucosa.

Its subcellular location is the cytoplasm. The enzyme catalyses an aldehyde + O2 + H2O = a carboxylate + H2O2 + H(+). Oxidase with broad substrate specificity, oxidizing aromatic azaheterocycles, such as phthalazine, as well as aldehydes, such as benzaldehyde and retinal. In Cavia porcellus (Guinea pig), this protein is Aldehyde oxidase 2 (AOX2).